Consider the following 256-residue polypeptide: H-2 class II histocompatibility antigen, A-D alpha chain (256 aa).

Residues 1-23 (MPCSRALILGVLALNTMLSLCGG) form the signal peptide. Residues 24–111 (EDDIEADHVG…KRSNFTPATN (88 aa)) are alpha-1. The Extracellular portion of the chain corresponds to 24-218 (EDDIEADHVG…IPAPMSELTE (195 aa)). The interval 112–205 (EAPQATVFPK…GLEEPVLKHW (94 aa)) is alpha-2. Positions 114-206 (PQATVFPKSP…LEEPVLKHWE (93 aa)) constitute an Ig-like C1-type domain. C134 and C190 are joined by a disulfide. An N-linked (GlcNAc...) asparagine glycan is attached at N145. The connecting peptide stretch occupies residues 206–218 (EPEIPAPMSELTE). A helical membrane pass occupies residues 219 to 244 (TVVCALGLSVGLVGIVVGTIFIIQGL). Topologically, residues 245–256 (RSGGTSRHPGPL) are cytoplasmic.

It belongs to the MHC class II family.

It localises to the membrane. The polypeptide is H-2 class II histocompatibility antigen, A-D alpha chain (H2-Aa) (Mus musculus (Mouse)).